Here is a 910-residue protein sequence, read N- to C-terminus: DNA mismatch repair protein MutS (910 aa).

A compositionally biased stretch (basic and acidic residues) spans Met1–Glu11. The interval Met1–Pro21 is disordered. ATP is bound at residue Gly658–Ser665.

It belongs to the DNA mismatch repair MutS family.

Its function is as follows. This protein is involved in the repair of mismatches in DNA. It is possible that it carries out the mismatch recognition step. This protein has a weak ATPase activity. In Brucella melitensis biotype 1 (strain ATCC 23456 / CCUG 17765 / NCTC 10094 / 16M), this protein is DNA mismatch repair protein MutS.